The primary structure comprises 267 residues: tRNA pseudouridine synthase A (267 aa).

D51 (nucleophile) is an active-site residue. Residue Y109 participates in substrate binding.

Belongs to the tRNA pseudouridine synthase TruA family. In terms of assembly, homodimer.

The catalysed reaction is uridine(38/39/40) in tRNA = pseudouridine(38/39/40) in tRNA. In terms of biological role, formation of pseudouridine at positions 38, 39 and 40 in the anticodon stem and loop of transfer RNAs. The protein is tRNA pseudouridine synthase A of Staphylococcus saprophyticus subsp. saprophyticus (strain ATCC 15305 / DSM 20229 / NCIMB 8711 / NCTC 7292 / S-41).